We begin with the raw amino-acid sequence, 99 residues long: ATP-dependent Clp protease adapter protein ClpS (99 aa).

It belongs to the ClpS family. Binds to the N-terminal domain of the chaperone ClpA.

Its function is as follows. Involved in the modulation of the specificity of the ClpAP-mediated ATP-dependent protein degradation. The protein is ATP-dependent Clp protease adapter protein ClpS of Helicobacter hepaticus (strain ATCC 51449 / 3B1).